Reading from the N-terminus, the 472-residue chain is UDP-glucosyltransferase 103 (472 aa).

Residue H15 is the Proton acceptor of the active site. Residue H15 coordinates an anthocyanidin. D117 functions as the Charge relay in the catalytic mechanism. UDP-alpha-D-glucose is bound by residues A344, Q346, H361, W364, N365, S366, and E369. G384 is an an anthocyanidin binding site. UDP-alpha-D-glucose contacts are provided by E385 and Q386.

Belongs to the UDP-glycosyltransferase family.

The enzyme catalyses (20S)-ginsenoside F1 + UDP-alpha-D-glucose = (20S)-ginsenoside Rg1 + UDP + H(+). It participates in secondary metabolite biosynthesis; terpenoid biosynthesis. Its function is as follows. Probable component of the triterpene saponins (e.g. ginsenosides) biosynthetic pathway. No detectable activity toward protopanaxatriol (PPT). The polypeptide is UDP-glucosyltransferase 103 (Panax ginseng (Korean ginseng)).